The following is a 269-amino-acid chain: Chymotrypsin-like elastase family member 2A (269 aa).

The first 16 residues, 1-16, serve as a signal peptide directing secretion; that stretch reads MIRALLLSTLVAGALS. A propeptide spans 17–28 (activation peptide); that stretch reads CGLPANLPQLPR. Residues 29-267 form the Peptidase S1 domain; it reads VVGGEDARPN…YIDWINSVIA (239 aa). A disulfide bridge links cysteine 58 with cysteine 74. Catalysis depends on charge relay system residues histidine 73 and aspartate 121. Disulfide bonds link cysteine 155–cysteine 222, cysteine 186–cysteine 202, and cysteine 212–cysteine 243. The active-site Charge relay system is serine 216.

The protein belongs to the peptidase S1 family. Elastase subfamily. In terms of assembly, interacts with CPA1. Interacts with SERPINA1. In terms of tissue distribution, pancreas.

The protein resides in the secreted. It carries out the reaction Preferential cleavage: Leu-|-Xaa, Met-|-Xaa and Phe-|-Xaa. Hydrolyzes elastin.. Elastase that enhances insulin signaling and might have a physiologic role in cellular glucose metabolism. Circulates in plasma and reduces platelet hyperactivation, triggers both insulin secretion and degradation, and increases insulin sensitivity. This is Chymotrypsin-like elastase family member 2A (CELA2A) from Sus scrofa (Pig).